A 119-amino-acid polypeptide reads, in one-letter code: Large ribosomal subunit protein bL20 (119 aa).

The protein belongs to the bacterial ribosomal protein bL20 family.

Its function is as follows. Binds directly to 23S ribosomal RNA and is necessary for the in vitro assembly process of the 50S ribosomal subunit. It is not involved in the protein synthesizing functions of that subunit. In Bacillus licheniformis (strain ATCC 14580 / DSM 13 / JCM 2505 / CCUG 7422 / NBRC 12200 / NCIMB 9375 / NCTC 10341 / NRRL NRS-1264 / Gibson 46), this protein is Large ribosomal subunit protein bL20.